Consider the following 156-residue polypeptide: Protein US1 (156 aa).

2 disordered regions span residues 90-114 (RSRS…SDGD) and 133-156 (ARRW…DSTS). Over residues 96-111 (AESGRSSSSSSVSVLS) the composition is skewed to low complexity. Residues 147-156 (SQQAKNDSTS) are compositionally biased toward polar residues.

In Homo sapiens (Human), this protein is Protein US1 (US1).